We begin with the raw amino-acid sequence, 227 residues long: MICOS complex subunit Mic19 (227 aa).

Gly2 carries the N-myristoyl glycine lipid modification. The residue at position 29 (Ser29) is a Phosphoserine. Residues 32-57 (VIDRMKESSPSGSKSQRYSSVYGASV) form a disordered region. Residues 39-50 (SSPSGSKSQRYS) are compositionally biased toward polar residues. Tyr49 is modified (phosphotyrosine). 4 positions are modified to phosphoserine: Ser50, Ser51, Ser56, and Ser58. The disordered stretch occupies residues 73–92 (EQAKKESEHQRRLKQARDLE). Lys142 carries the post-translational modification N6-acetyllysine. The 43-residue stretch at 180–222 (HPVCADLQTKILQCYRQNTQQTLSCSALASQYMHCVNHAKQSM) folds into the CHCH domain. 2 consecutive short sequence motifs (cx9C motif) follow at residues 183–193 (CADLQTKILQC) and 204–214 (CSALASQYMHC). 2 cysteine pairs are disulfide-bonded: Cys183–Cys214 and Cys193–Cys204.

This sequence belongs to the MICOS complex subunit Mic19 family. Metazoan Mic19 subfamily. Component of the mitochondrial contact site and cristae organizing system (MICOS) complex, composed of at least MICOS10/MIC10, CHCHD3/MIC19, CHCHD6/MIC25, APOOL/MIC27, IMMT/MIC60, APOO/MIC23/MIC26 and MICOS13/MIC13. This complex was also known under the names MINOS or MitOS complex. The MICOS complex associates with mitochondrial outer membrane proteins SAMM50, MTX1 and MTX2 (together described as components of the mitochondrial outer membrane sorting assembly machinery (SAM) complex) and DNAJC11, mitochondrial inner membrane protein TMEM11 and with HSPA9. The MICOS and SAM complexes together with DNAJC11 are part of a large protein complex spanning both membranes termed the mitochondrial intermembrane space bridging (MIB) complex. Interacts with HSPA1A/HSPA1B and OPA1, preferentially with the soluble OPA1 form.

The protein localises to the mitochondrion inner membrane. It localises to the cytoplasm. Its subcellular location is the nucleus. The protein resides in the mitochondrion. Functionally, component of the MICOS complex, a large protein complex of the mitochondrial inner membrane that plays crucial roles in the maintenance of crista junctions, inner membrane architecture, and formation of contact sites to the outer membrane. Has also been shown to function as a transcription factor which binds to the BAG1 promoter and represses BAG1 transcription. Plays an important role in the maintenance of the MICOS complex stability and the mitochondrial cristae morphology. The sequence is that of MICOS complex subunit Mic19 (Chchd3) from Mus musculus (Mouse).